Here is a 46-residue protein sequence, read N- to C-terminus: DNA-directed RNA polymerase subunit Rpo12 (46 aa).

Zn(2+)-binding residues include C9, C24, and C27.

The protein belongs to the archaeal Rpo12/eukaryotic RPC10 RNA polymerase subunit family. In terms of assembly, part of the RNA polymerase complex. Interacts with Rpo3. Forms an Rpo3-Rpo10-Rpo11-Rpo12 complex upon coexpression. Requires Zn(2+) as cofactor.

It localises to the cytoplasm. It carries out the reaction RNA(n) + a ribonucleoside 5'-triphosphate = RNA(n+1) + diphosphate. DNA-dependent RNA polymerase (RNAP) catalyzes the transcription of DNA into RNA using the four ribonucleoside triphosphates as substrates. The chain is DNA-directed RNA polymerase subunit Rpo12 from Methanocaldococcus jannaschii (strain ATCC 43067 / DSM 2661 / JAL-1 / JCM 10045 / NBRC 100440) (Methanococcus jannaschii).